Reading from the N-terminus, the 1450-residue chain is DNA-directed RNA polymerase RPB1 homolog (1450 aa).

This sequence belongs to the RNA polymerase beta' chain family. As to quaternary structure, part of the viral DNA-directed RNA polymerase that consists of 8 polII-like subunits (RPB1, RPB2, RPB3, RPB5, RPB6, RPB7, RPB9, RPB10), a capping enzyme and a termination factor.

It is found in the virion. It catalyses the reaction RNA(n) + a ribonucleoside 5'-triphosphate = RNA(n+1) + diphosphate. Functionally, catalytic component of the DNA-directed RNA polymerase (RNAP) that catalyzes the transcription in the cytoplasm of viral DNA into RNA using the four ribonucleoside triphosphates as substrates. Forms the polymerase active center together with RPB2. Part of the core element with the central large cleft, the clamp element that moves to open and close the cleft and the jaws that are thought to grab the incoming DNA template. The polypeptide is DNA-directed RNA polymerase RPB1 homolog (African swine fever virus (strain Badajoz 1971 Vero-adapted) (Ba71V)).